Reading from the N-terminus, the 350-residue chain is Heme A synthase (350 aa).

A run of 8 helical transmembrane segments spans residues 14-34, 95-115, 125-145, 162-182, 202-222, 260-280, 296-316, and 317-337; these read VAIW…IGGF, YVHR…FIYF, VVIK…AGWY, LALH…QFFD, VGII…VAGL, VQFI…ILTV, IIQI…AIAI, and AHQV…CYLR. H264 serves as a coordination point for heme. Position 318 (H318) interacts with heme.

Belongs to the COX15/CtaA family. Type 2 subfamily. Interacts with CtaB. The cofactor is heme b.

It is found in the cell membrane. The catalysed reaction is Fe(II)-heme o + 2 A + H2O = Fe(II)-heme a + 2 AH2. The protein operates within porphyrin-containing compound metabolism; heme A biosynthesis; heme A from heme O: step 1/1. In terms of biological role, catalyzes the conversion of heme O to heme A by two successive hydroxylations of the methyl group at C8. The first hydroxylation forms heme I, the second hydroxylation results in an unstable dihydroxymethyl group, which spontaneously dehydrates, resulting in the formyl group of heme A. The polypeptide is Heme A synthase (Wolbachia pipientis wMel).